Reading from the N-terminus, the 209-residue chain is Superoxide dismutase [Mn/Fe] (209 aa).

His-38, His-90, Asp-172, and His-176 together coordinate Fe(3+). Mn(2+) contacts are provided by His-38, His-90, Asp-172, and His-176.

The protein belongs to the iron/manganese superoxide dismutase family. The cofactor is Mn(2+). Fe(3+) is required as a cofactor.

It catalyses the reaction 2 superoxide + 2 H(+) = H2O2 + O2. Its function is as follows. Destroys superoxide anion radicals which are normally produced within the cells and which are toxic to biological systems. Catalyzes the dismutation of superoxide anion radicals into O2 and H2O2 by successive reduction and oxidation of the transition metal ion at the active site. The sequence is that of Superoxide dismutase [Mn/Fe] (sodB) from Rickettsia typhi (strain ATCC VR-144 / Wilmington).